The following is a 279-amino-acid chain: Protoheme IX farnesyltransferase (279 aa).

The next 9 membrane-spanning stretches (helical) occupy residues 5 to 25 (LILLKPRVIWLLILASLAGYL), 33 to 53 (IAQAFSLLLVAFLSTGGAAAF), 84 to 103 (LAYSLVLSALGIALGFLLLG), 108 to 125 (LFVFLGWFFYAVVYTVIL), 133 to 153 (ILGGGFAGNATFLGGYALGAG), 159 to 179 (AVLISFAIYLWIPSHIWALAY), 201 to 221 (AAVAIISLLNLASAAYIMTLY), 222 to 242 (LAFGGGLLGGALVAAGVVATI), and 256 to 276 (AMWKMYKASSPVLTLFLLALI).

The protein belongs to the UbiA prenyltransferase family. Protoheme IX farnesyltransferase subfamily.

Its subcellular location is the cell membrane. The enzyme catalyses heme b + (2E,6E)-farnesyl diphosphate + H2O = Fe(II)-heme o + diphosphate. The protein operates within porphyrin-containing compound metabolism; heme O biosynthesis; heme O from protoheme: step 1/1. In terms of biological role, converts heme B (protoheme IX) to heme O by substitution of the vinyl group on carbon 2 of heme B porphyrin ring with a hydroxyethyl farnesyl side group. The protein is Protoheme IX farnesyltransferase of Pyrobaculum arsenaticum (strain DSM 13514 / JCM 11321 / PZ6).